We begin with the raw amino-acid sequence, 147 residues long: DNA-directed RNA polymerase RPB6 homolog (147 aa).

It belongs to the archaeal RpoK/eukaryotic RPB6 RNA polymerase subunit family. In terms of assembly, part of the viral DNA-directed RNA polymerase that consists of 8 polII-like subunits (RPB1, RPB2, RPB3, RPB5, RPB6, RPB7, RPB9, RPB10), a capping enzyme and a termination factor.

The protein resides in the host cytoplasm. It is found in the virion. In terms of biological role, component of the DNA-directed RNA polymerase (RNAP) that catalyzes the transcription in the cytoplasm of viral DNA into RNA using the four ribonucleoside triphosphates as substrates. This is DNA-directed RNA polymerase RPB6 homolog from Ornithodoros (relapsing fever ticks).